Consider the following 892-residue polypeptide: Alpha-actinin-1 (892 aa).

Methionine 1 carries the post-translational modification N-acetylmethionine. The segment at 1 to 247 (MDHYDSQQTN…IMTYVSSFYH (247 aa)) is actin-binding. The residue at position 6 (serine 6) is a Phosphoserine. Tyrosine 12 carries the post-translational modification Phosphotyrosine; by FAK1. 2 Calponin-homology (CH) domains span residues 31-135 (KQQR…LRFA) and 144-250 (TSAK…HAFS). Lysine 95 and lysine 195 each carry N6-acetyllysine. Spectrin repeat units follow at residues 274-384 (QLME…WLLN), 394-499 (HLAE…ALER), 509-620 (QLYL…ALTE), and 630-733 (RLRK…EVEN). The tract at residues 274-733 (QLMEDYEKLA…IARTINEVEN (460 aa)) is interaction with DDN. At serine 471 the chain carries Phosphoserine. The residue at position 676 (lysine 676) is an N6-acetyllysine. Residue serine 677 is modified to Phosphoserine. EF-hand domains lie at 746–781 (EQMN…LGYD) and 787–822 (QGEA…ETAD). Residues aspartate 759, aspartate 761, serine 763, threonine 765, and glutamate 770 each coordinate Ca(2+). A Phosphoserine modification is found at serine 890.

It belongs to the alpha-actinin family. As to quaternary structure, homodimer; antiparallel. Interacts with MYOZ2, TTID and LPP. Interacts with DDN. Interacts with PSD. Interacts with MICALL2. Interacts with DNM2 and CTTN. Interacts with PDLIM1. Interacts with PDLIM2. Interacts with PDLIM4 (via PDZ domain). Interacts with IGSF8.

It is found in the cytoplasm. The protein localises to the cytoskeleton. It localises to the myofibril. Its subcellular location is the sarcomere. The protein resides in the z line. It is found in the cell membrane. The protein localises to the cell junction. It localises to the cell projection. Its subcellular location is the ruffle. In terms of biological role, F-actin cross-linking protein which is thought to anchor actin to a variety of intracellular structures. Association with IGSF8 regulates the immune synapse formation and is required for efficient T-cell activation. The polypeptide is Alpha-actinin-1 (ACTN1) (Macaca fascicularis (Crab-eating macaque)).